A 274-amino-acid polypeptide reads, in one-letter code: 5'-nucleotidase SurE (274 aa).

The a divalent metal cation site is built by Asp12, Asp13, Ser45, and Asn103.

The protein belongs to the SurE nucleotidase family. It depends on a divalent metal cation as a cofactor.

It is found in the cytoplasm. The catalysed reaction is a ribonucleoside 5'-phosphate + H2O = a ribonucleoside + phosphate. Its function is as follows. Nucleotidase that shows phosphatase activity on nucleoside 5'-monophosphates. In Chlamydia felis (strain Fe/C-56) (Chlamydophila felis), this protein is 5'-nucleotidase SurE.